A 373-amino-acid chain; its full sequence is ATP-dependent 6-phosphofructokinase (373 aa).

Residues Gly12, 74 to 75, and 110 to 113 contribute to the ATP site; these read RD and GGGT. Residues 133-135, Arg170, 177-179, Glu230, Arg291, and 297-300 contribute to the substrate site; these read TID, MGH, and YVQR. Asp135 functions as the Proton acceptor in the catalytic mechanism.

This sequence belongs to the phosphofructokinase type A (PFKA) family. Mixed-substrate PFK group III subfamily. In terms of assembly, homodimer or homotetramer. Requires Mg(2+) as cofactor.

Its subcellular location is the cytoplasm. It catalyses the reaction beta-D-fructose 6-phosphate + ATP = beta-D-fructose 1,6-bisphosphate + ADP + H(+). It functions in the pathway carbohydrate degradation; glycolysis; D-glyceraldehyde 3-phosphate and glycerone phosphate from D-glucose: step 3/4. Its function is as follows. Catalyzes the phosphorylation of D-fructose 6-phosphate to fructose 1,6-bisphosphate by ATP, the first committing step of glycolysis. In Propionibacterium freudenreichii subsp. shermanii (strain ATCC 9614 / DSM 4902 / CIP 103027 / NCIMB 8099 / CIRM-BIA1), this protein is ATP-dependent 6-phosphofructokinase.